A 363-amino-acid polypeptide reads, in one-letter code: Photosystem II protein D1 1 (363 aa).

3 helical membrane passes run 32–49 (YVGWFGLLMIPSLFVSAI), 121–136 (HFLIAIWTYLGRQWEL), and 145–159 (WIAMAFSAPVAAATA). Residue H121 coordinates chlorophyll a. Pheophytin a is bound at residue Y129. Residues E173 and E192 each coordinate [CaMn4O5] cluster. A helical transmembrane segment spans residues 200-221 (FHMLGVVGVFGGAFLSAMHGSL). H201 is a binding site for chlorophyll a. Residues H218 and 268 to 269 (AF) each bind a quinone. Fe cation is bound at residue H218. Position 276 (H276) interacts with Fe cation. A helical membrane pass occupies residues 278 to 292 (LLAVLPTIGIWFAAL). Positions 336 and 348 each coordinate [CaMn4O5] cluster. Positions 349–363 (STESKEIPTIPIMTS) are excised as a propeptide.

This sequence belongs to the reaction center PufL/M/PsbA/D family. In terms of assembly, PSII is composed of 1 copy each of membrane proteins PsbA, PsbB, PsbC, PsbD, PsbE, PsbF, PsbH, PsbI, PsbJ, PsbK, PsbL, PsbM, PsbT, PsbX, PsbY, PsbZ, Psb30/Ycf12, peripheral proteins PsbO, CyanoQ (PsbQ), PsbU, PsbV and a large number of cofactors. It forms dimeric complexes. It depends on The D1/D2 heterodimer binds P680, chlorophylls that are the primary electron donor of PSII, and subsequent electron acceptors. It shares a non-heme iron and each subunit binds pheophytin, quinone, additional chlorophylls, carotenoids and lipids. D1 provides most of the ligands for the Mn4-Ca-O5 cluster of the oxygen-evolving complex (OEC). There is also a Cl(-1) ion associated with D1 and D2, which is required for oxygen evolution. The PSII complex binds additional chlorophylls, carotenoids and specific lipids. as a cofactor. Tyr-164 forms a radical intermediate that is referred to as redox-active TyrZ, YZ or Y-Z. In terms of processing, C-terminally processed by CtpA; processing is essential to allow assembly of the oxygen-evolving complex and thus photosynthetic growth.

It localises to the cellular thylakoid membrane. It catalyses the reaction 2 a plastoquinone + 4 hnu + 2 H2O = 2 a plastoquinol + O2. In terms of biological role, photosystem II (PSII) is a light-driven water:plastoquinone oxidoreductase that uses light energy to abstract electrons from H(2)O, generating O(2) and a proton gradient subsequently used for ATP formation. It consists of a core antenna complex that captures photons, and an electron transfer chain that converts photonic excitation into a charge separation. The D1/D2 (PsbA/PsbD) reaction center heterodimer binds P680, the primary electron donor of PSII as well as several subsequent electron acceptors. This is Photosystem II protein D1 1 from Acaryochloris marina (strain MBIC 11017).